A 145-amino-acid polypeptide reads, in one-letter code: Maximins 5/H4 type 1 (145 aa).

The signal sequence occupies residues 1–18; the sequence is MNFKYIVAVSFLIASAYA. 2 propeptides span residues 19 to 43 and 74 to 124; these read RSVQ…REIR and TAEE…KEKR. Leu144 bears the Leucine amide mark.

The protein belongs to the bombinin family. Expressed by the skin glands.

The protein resides in the secreted. In terms of biological role, maximin-5 shows antibacterial activity against both Gram-positive and Gram-negative bacteria. The only exception is the resistance of E.coli. Also shows antimicrobial activity against fungi C.albicans, A.flavus and P.uticale. It has little hemolytic activity. It does not possess a significant cytotoxicity against tumor cell lines. It does not possess a significant anti-HIV activity. Functionally, maximin-H4 shows antibacterial activity against both Gram-positive and Gram-negative bacteria. It also shows antimicrobial activity against the fungus C.albicans. Shows strong hemolytic activity. The sequence is that of Maximins 5/H4 type 1 from Bombina maxima (Giant fire-bellied toad).